Here is a 690-residue protein sequence, read N- to C-terminus: Calpain-9 (690 aa).

The tract at residues 1–24 (MPYLYRAPGPQAHPVPKDARITHS) is disordered. In terms of domain architecture, Calpain catalytic spans 42–337 (LFEDADFPAS…FDKVEICNLT (296 aa)). Ca(2+)-binding residues include L81, G83, and D88. C97 is a catalytic residue. E167 is a Ca(2+) binding site. Catalysis depends on residues H254 and N278. Ca(2+)-binding residues include E284, D291, L312, D314, and E316. Positions 338 to 521 (PDALEEDAIH…PPDQETEEEQ (184 aa)) are domain III. The tract at residues 498 to 519 (GNVDIDLPEPPKPTPPDQETEE) is disordered. EF-hand domains lie at 518–552 (EEEQ…VLQK), 561–589 (LSLI…FKVF), and 591–626 (DKLK…AGFQ). Residues 522-690 (RFRALFEQVA…NEFIHLTMNI (169 aa)) are domain IV. Residues D574, S576, N578, K580, E585, D604, D606, S608, T610, and E615 each coordinate Ca(2+).

Belongs to the peptidase C2 family. Expressed predominantly in stomach.

Functionally, calcium-regulated non-lysosomal thiol-protease. The sequence is that of Calpain-9 (CAPN9) from Homo sapiens (Human).